The following is a 424-amino-acid chain: Histidinol dehydrogenase (424 aa).

NAD(+) contacts are provided by Tyr-121, Gln-183, and Asn-206. 3 residues coordinate substrate: Ser-229, Gln-251, and His-254. Residues Gln-251 and His-254 each coordinate Zn(2+). Residues Glu-319 and His-320 each act as proton acceptor in the active site. Substrate is bound by residues His-320, Asp-353, Glu-407, and His-412. Position 353 (Asp-353) interacts with Zn(2+). His-412 lines the Zn(2+) pocket.

This sequence belongs to the histidinol dehydrogenase family. Zn(2+) is required as a cofactor.

It catalyses the reaction L-histidinol + 2 NAD(+) + H2O = L-histidine + 2 NADH + 3 H(+). Its pathway is amino-acid biosynthesis; L-histidine biosynthesis; L-histidine from 5-phospho-alpha-D-ribose 1-diphosphate: step 9/9. Its function is as follows. Catalyzes the sequential NAD-dependent oxidations of L-histidinol to L-histidinaldehyde and then to L-histidine. The protein is Histidinol dehydrogenase of Halalkalibacterium halodurans (strain ATCC BAA-125 / DSM 18197 / FERM 7344 / JCM 9153 / C-125) (Bacillus halodurans).